Reading from the N-terminus, the 760-residue chain is Polyribonucleotide nucleotidyltransferase (760 aa).

Positions 492 and 498 each coordinate Mg(2+). The region spanning 559-618 (PQHAEVFVNPDIIRIIIGPGGKNIKAITATTGASIDIEDSGRVSIFAPTLEAMEMAREMV) is the KH domain. Residues 628–702 (GKNYTGKVRK…SRKAVLLEEQ (75 aa)) enclose the S1 motif domain. The segment at 706–760 (WKPEDTARPSGPREGGRRDGGRDGRRDGGRDGRRDGGRDGGRRDGGRRDGGRDRN) is disordered. Residues 719-760 (EGGRRDGGRDGRRDGGRDGRRDGGRDGGRRDGGRRDGGRDRN) show a composition bias toward basic and acidic residues.

It belongs to the polyribonucleotide nucleotidyltransferase family. Mg(2+) is required as a cofactor.

The protein localises to the cytoplasm. The enzyme catalyses RNA(n+1) + phosphate = RNA(n) + a ribonucleoside 5'-diphosphate. Involved in mRNA degradation. Catalyzes the phosphorolysis of single-stranded polyribonucleotides processively in the 3'- to 5'-direction. This is Polyribonucleotide nucleotidyltransferase from Nitratidesulfovibrio vulgaris (strain ATCC 29579 / DSM 644 / CCUG 34227 / NCIMB 8303 / VKM B-1760 / Hildenborough) (Desulfovibrio vulgaris).